Consider the following 282-residue polypeptide: Pantothenate synthetase (282 aa).

28 to 35 (MGALHSGH) contacts ATP. The active-site Proton donor is the H35. Residue Q59 coordinates (R)-pantoate. Q59 lines the beta-alanine pocket. 146-149 (GEKD) provides a ligand contact to ATP. Residue Q152 participates in (R)-pantoate binding. Residues V175 and 183–186 (LSSR) contribute to the ATP site.

Belongs to the pantothenate synthetase family. As to quaternary structure, homodimer.

Its subcellular location is the cytoplasm. It catalyses the reaction (R)-pantoate + beta-alanine + ATP = (R)-pantothenate + AMP + diphosphate + H(+). Its pathway is cofactor biosynthesis; (R)-pantothenate biosynthesis; (R)-pantothenate from (R)-pantoate and beta-alanine: step 1/1. Functionally, catalyzes the condensation of pantoate with beta-alanine in an ATP-dependent reaction via a pantoyl-adenylate intermediate. In Salinispora arenicola (strain CNS-205), this protein is Pantothenate synthetase.